Reading from the N-terminus, the 81-residue chain is RNA-binding protein Hfq (81 aa).

The Sm domain occupies 11 to 71; it reads DIFLNSARKN…VSTITPLRPI (61 aa).

Belongs to the Hfq family. As to quaternary structure, homohexamer.

Functionally, RNA chaperone that binds small regulatory RNA (sRNAs) and mRNAs to facilitate mRNA translational regulation in response to envelope stress, environmental stress and changes in metabolite concentrations. Also binds with high specificity to tRNAs. The chain is RNA-binding protein Hfq from Clostridium acetobutylicum (strain ATCC 824 / DSM 792 / JCM 1419 / IAM 19013 / LMG 5710 / NBRC 13948 / NRRL B-527 / VKM B-1787 / 2291 / W).